The sequence spans 120 residues: UPF0102 protein TWT_455 (120 aa).

Belongs to the UPF0102 family.

The sequence is that of UPF0102 protein TWT_455 from Tropheryma whipplei (strain Twist) (Whipple's bacillus).